The chain runs to 290 residues: Oxaloacetate decarboxylase 2 (290 aa).

S50 is a binding site for substrate. D88 provides a ligand contact to Mg(2+). Positions 159 and 235 each coordinate substrate.

It belongs to the isocitrate lyase/PEP mutase superfamily. Oxaloacetate decarboxylase family. As to quaternary structure, homotetramer; dimer of dimers. Mg(2+) is required as a cofactor.

It catalyses the reaction oxaloacetate + H(+) = pyruvate + CO2. Catalyzes the decarboxylation of oxaloacetate into pyruvate. Seems to play a role in maintaining cellular concentrations of bicarbonate and pyruvate. The protein is Oxaloacetate decarboxylase 2 of Pseudomonas fluorescens (strain Pf0-1).